The sequence spans 448 residues: Probable 3-ketoacyl-CoA thiolase (448 aa).

Residue Cys110 is the Acyl-thioester intermediate of the active site. Active-site proton acceptor residues include His402 and Cys432.

The protein belongs to the thiolase-like superfamily. Thiolase family.

The protein resides in the mitochondrion. The enzyme catalyses an acyl-CoA + acetyl-CoA = a 3-oxoacyl-CoA + CoA. Its pathway is lipid metabolism; fatty acid beta-oxidation. Its function is as follows. Mitochondrial enzyme that catalyzes reactions of the mitochondrial beta-oxidation pathway. The polypeptide is Probable 3-ketoacyl-CoA thiolase (Caenorhabditis elegans).